An 86-amino-acid chain; its full sequence is Small ribosomal subunit protein uS15 (86 aa).

The protein belongs to the universal ribosomal protein uS15 family. As to quaternary structure, part of the 30S ribosomal subunit. Forms a bridge to the 50S subunit in the 70S ribosome, contacting the 23S rRNA.

Its function is as follows. One of the primary rRNA binding proteins, it binds directly to 16S rRNA where it helps nucleate assembly of the platform of the 30S subunit by binding and bridging several RNA helices of the 16S rRNA. In terms of biological role, forms an intersubunit bridge (bridge B4) with the 23S rRNA of the 50S subunit in the ribosome. In Endomicrobium trichonymphae, this protein is Small ribosomal subunit protein uS15.